We begin with the raw amino-acid sequence, 65 residues long: pH-response transcription factor pacC/RIM101 (65 aa).

The C2H2-type 1 zinc finger occupies 16-40 (LTCQWNSCRTTTVKRDHITSHIRVH). The segment at 46–65 (HKCEFCGKSFKRPQDLKKHV) adopts a C2H2-type 2; degenerate zinc-finger fold.

This sequence belongs to the pacC/RIM101 family.

The protein resides in the nucleus. Its function is as follows. Transcription factor that mediates regulation of both acid- and alkaline-expressed genes in response to ambient pH. At alkaline ambient pH, activates transcription of alkaline-expressed genes (including pac1 itself) and represses transcription of acid-expressed genes. This Colletotrichum gloeosporioides (Anthracnose fungus) protein is pH-response transcription factor pacC/RIM101 (pac1).